The sequence spans 493 residues: Chaperone SurA (493 aa).

Positions 1–33 (MKRQAFSLLSRLNPWQQLLLSAVLVTLAAPAAA) are cleaved as a signal peptide. Residues 46-76 (FTQQGSQSASQGSTVAPSQPMMGVPQPSSQP) form a disordered region. Residues 48–58 (QQGSQSASQGS) are compositionally biased toward low complexity. PpiC domains lie at 230 to 332 (PTEF…KLVS) and 346 to 444 (IAQT…QVEN).

It is found in the periplasm. It carries out the reaction [protein]-peptidylproline (omega=180) = [protein]-peptidylproline (omega=0). Its function is as follows. Chaperone involved in the correct folding and assembly of outer membrane proteins. Recognizes specific patterns of aromatic residues and the orientation of their side chains, which are found more frequently in integral outer membrane proteins. May act in both early periplasmic and late outer membrane-associated steps of protein maturation. The protein is Chaperone SurA of Cupriavidus metallidurans (strain ATCC 43123 / DSM 2839 / NBRC 102507 / CH34) (Ralstonia metallidurans).